The primary structure comprises 438 residues: Protein SPMIP7 (438 aa).

As to expression, testis-specific.

In terms of biological role, essential for normal spermatogenesis. This Homo sapiens (Human) protein is Protein SPMIP7.